Consider the following 382-residue polypeptide: Galactokinase (382 aa).

34-37 (EHTD) provides a ligand contact to substrate. 124–130 (GAGLSSS) serves as a coordination point for ATP. Mg(2+) contacts are provided by S130 and E162. D174 serves as the catalytic Proton acceptor. Position 223 (Y223) interacts with substrate.

Belongs to the GHMP kinase family. GalK subfamily.

It is found in the cytoplasm. The catalysed reaction is alpha-D-galactose + ATP = alpha-D-galactose 1-phosphate + ADP + H(+). It participates in carbohydrate metabolism; galactose metabolism. Functionally, catalyzes the transfer of the gamma-phosphate of ATP to D-galactose to form alpha-D-galactose-1-phosphate (Gal-1-P). This chain is Galactokinase, found in Salmonella paratyphi A (strain ATCC 9150 / SARB42).